Here is a 143-residue protein sequence, read N- to C-terminus: Endoribonuclease YbeY (143 aa).

Residues histidine 109, histidine 113, and aspartate 119 each coordinate Zn(2+).

This sequence belongs to the endoribonuclease YbeY family. Zn(2+) is required as a cofactor.

Its subcellular location is the cytoplasm. In terms of biological role, single strand-specific metallo-endoribonuclease involved in late-stage 70S ribosome quality control and in maturation of the 3' terminus of the 16S rRNA. This is Endoribonuclease YbeY from Christiangramia forsetii (strain DSM 17595 / CGMCC 1.15422 / KT0803) (Gramella forsetii).